The sequence spans 551 residues: Cleavage and polyadenylation specificity factor subunit 6 (551 aa).

Residues 1-213 form a necessary for interaction with NXF1 region; the sequence is MADGVDHIDI…RGRFPGAVPG (213 aa). One can recognise an RRM domain in the interval 81–161; the sequence is IALYIGNLTW…QSPVVTPCNK (81 aa). The tract at residues 81 to 161 is necessary for interaction with NUDT21/CPSF5; the sequence is IALYIGNLTW…QSPVVTPCNK (81 aa). A necessary for nuclear paraspeckles localization region spans residues 81 to 161; it reads IALYIGNLTW…QSPVVTPCNK (81 aa). Threonine 157 bears the Phosphothreonine mark. Over residues 169-180 the composition is skewed to polar residues; it reads MQSRKTTQSGQM. Disordered regions lie at residues 169-411 and 477-551; these read MQSR…PLSE and LHGI…YRHR. The segment covering 184–193 has biased composition (gly residues); that stretch reads GKAGPPGGGS. Residues 202–206 carry the GAR motif; it reads RGRGR. Over residues 207-219 the composition is skewed to low complexity; that stretch reads FPGAVPGGDRFPG. Pro residues-rich tracts occupy residues 220 to 265, 285 to 366, and 377 to 388; these read PAGP…PLAG, GQPP…PPPT, and GPPPTDPYGRPP. Residues 389-404 show a composition bias toward basic and acidic residues; the sequence is PYDRGDYGPPGREMDT. Phosphothreonine is present on residues threonine 404 and threonine 407. Positions 404-551 are sufficient for nuclear speckle localization; that stretch reads TARTPLSEAE…RDREREYRHR (148 aa). Residues 405–551 form a necessary for RNA-binding region; it reads ARTPLSEAEF…RDREREYRHR (147 aa). The necessary for interaction with SRSF3, SRSF7 and TRA2B/SFRS10 stretch occupies residues 481-551; sequence ESKSYGSGSR…RDREREYRHR (71 aa). The span at 489-503 shows a compositional bias: basic and acidic residues; the sequence is SRRERSRERDHSRSR. The arg/Ser-rich domain stretch occupies residues 490–551; the sequence is RRERSRERDH…RDREREYRHR (62 aa). A phosphoserine mark is found at serine 494, serine 500, serine 511, serine 513, and serine 525. The segment covering 504 to 514 has biased composition (basic residues); the sequence is EKSRRHKSRSR. The segment at 510–551 is sufficient for nuclear targeting; the sequence is KSRSRDRHDDYYRERSRERERHRDRDRDRDRERDREREYRHR. Residues 515–551 are compositionally biased toward basic and acidic residues; the sequence is DRHDDYYRERSRERERHRDRDRDRDRERDREREYRHR.

The protein belongs to the RRM CPSF6/7 family. Component of the cleavage factor Im (CFIm) complex which is a heterotetramer composed of two subunits of NUDT21/CPSF5 and two subunits of CPSF6 or CPSF7 or a heterodimer of CPSF6 and CPSF7. The cleavage factor Im (CFIm) complex associates with the CPSF and CSTF complexes to promote the assembly of the core mRNA 3'-processing machinery. Associates with the exon junction complex (EJC). Associates with the 80S ribosome particle. Interacts (via the RRM domain) with NUDT21/CPSF5; this interaction is direct and enhances binding to RNA. Interacts (via Arg/Ser-rich domain) with FIP1L1 (preferentially via unphosphorylated form and Arg/Glu/Asp-rich domain); this interaction mediates, at least in part, the interaction between the CFIm and CPSF complexes and may be inhibited by CPSF6 hyper-phosphorylation. Interacts (via N-terminus) with NXF1; this interaction is direct. Interacts with SRSF3. Interacts with SRSF7. Interacts with SNRNP70. Interacts with TRA2B/SFRS10. Interacts with UPF1. Interacts with UPF3B. Interacts with VIRMA. Interacts (via Arg/Ser-rich domain) with TNPO3; promoting nuclear import of CPSF6 independently of its phosphorylation status. Interacts with YTHDC1. Phosphorylated. Phosphorylated in the Arg/Ser-rich domain by SRPK1, in vitro. Post-translationally, symmetrically dimethylated on arginine residues by PRMT5 in a WDR77- and CLNS1A-dependent manner. Asymmetrically dimethylated on arginine residues by PRMT1. In terms of processing, symmetrically dimethylated on arginine residues in the GAR motif by PRMT5 in a WDR77- and CLNS1A-dependent manner. Asymmetrically dimethylated on arginine residues in the GAR motif by PRMT1. As to expression, expressed in testis. Expressed in male germ cells (at protein level).

Its subcellular location is the nucleus. It is found in the nucleoplasm. It localises to the nucleus speckle. The protein localises to the cytoplasm. Its function is as follows. Component of the cleavage factor Im (CFIm) complex that functions as an activator of the pre-mRNA 3'-end cleavage and polyadenylation processing required for the maturation of pre-mRNA into functional mRNAs. CFIm contributes to the recruitment of multiprotein complexes on specific sequences on the pre-mRNA 3'-end, so called cleavage and polyadenylation signals (pA signals). Most pre-mRNAs contain multiple pA signals, resulting in alternative cleavage and polyadenylation (APA) producing mRNAs with variable 3'-end formation. The CFIm complex acts as a key regulator of cleavage and polyadenylation site choice during APA through its binding to 5'-UGUA-3' elements localized in the 3'-untranslated region (UTR) for a huge number of pre-mRNAs. CPSF6 enhances NUDT21/CPSF5 binding to 5'-UGUA-3' elements localized upstream of pA signals and promotes RNA looping, and hence activates directly the mRNA 3'-processing machinery. Plays a role in mRNA export. The protein is Cleavage and polyadenylation specificity factor subunit 6 of Mus musculus (Mouse).